The sequence spans 24 residues: Chaperonin GroEL (24 aa).

The protein belongs to the chaperonin (HSP60) family. As to quaternary structure, forms a cylinder of 14 subunits composed of two heptameric rings stacked back-to-back. Interacts with the co-chaperonin GroES.

The protein localises to the cytoplasm. It carries out the reaction ATP + H2O + a folded polypeptide = ADP + phosphate + an unfolded polypeptide.. In terms of biological role, together with its co-chaperonin GroES, plays an essential role in assisting protein folding. The GroEL-GroES system forms a nano-cage that allows encapsulation of the non-native substrate proteins and provides a physical environment optimized to promote and accelerate protein folding. This Acinetobacter calcoaceticus protein is Chaperonin GroEL.